The following is a 371-amino-acid chain: MSMKQLETSMSSVSLQEKKPTRIKIALHPQSKSEQNETDRASKIPTGRISTTQPQTYYRPTNLTKTPASQVSRRSSYTTDPPSPLTGITGFRNYSLDDFEIGKALGKGKFGKVYLVKDKKTGFVSALKCMEKKELVEGNVEKQFRREVEIQSNLRHTNVLRLFGHFHDKDRVYLILEYVVHGELYKLLRNQKRFTESTASSYIYQMSEALLYLHGKNIIHRDIKPENILLHFNDTIKISDFGWSVHAPSNRRSTLCGTMDYLPPEIVQSRPYDKNVDVWSLGILMYEFLCGAPPFEEPGGAQATYRRIVKLDLRIPPYVSADAADLIKRMLTLDPAKRFKLKDMHKHPWIVRLRPTWKYKVPKTASHERSA.

Composition is skewed to polar residues over residues 1–15 and 48–80; these read MSMKQLETSMSSVSL and RISTTQPQTYYRPTNLTKTPASQVSRRSSYTTD. Residues 1–84 are disordered; that stretch reads MSMKQLETSM…SSYTTDPPSP (84 aa). Residues 99–350 enclose the Protein kinase domain; sequence FEIGKALGKG…LKDMHKHPWI (252 aa). ATP contacts are provided by residues 105–113 and Lys-128; that span reads LGKGKFGKV. The Proton acceptor role is filled by Asp-222.

The protein belongs to the protein kinase superfamily. Ser/Thr protein kinase family. Aurora subfamily.

The protein resides in the nucleus. It is found in the cytoplasm. The protein localises to the cytoskeleton. Its subcellular location is the spindle. It localises to the chromosome. The protein resides in the centromere. It is found in the kinetochore. It catalyses the reaction L-seryl-[protein] + ATP = O-phospho-L-seryl-[protein] + ADP + H(+). The enzyme catalyses L-threonyl-[protein] + ATP = O-phospho-L-threonyl-[protein] + ADP + H(+). In terms of biological role, component of the chromosomal passenger complex (CPC), a complex that acts as a key regulator of chromosome segregation and cytokinesis. Has a role in error-correction of aberrent kinetochore-microtubule attachments to ensure that sister kinetochores become bioriented and connect to opposite poles by promoting spindle assembly checkpoint signaling. This is Aurora kinase (IPL1) from Yarrowia lipolytica (strain CLIB 122 / E 150) (Yeast).